The primary structure comprises 256 residues: Large ribosomal subunit protein uL2 (256 aa).

The interval 208–230 (EHPHGGGNHQHIGKASTVKRGTS) is disordered.

Belongs to the universal ribosomal protein uL2 family. In larvae tissues examined: gut, brain imaginal disk, salivary glands, fat body, muscles, epidermis and trachaea.

It is found in the cytoplasm. This Drosophila melanogaster (Fruit fly) protein is Large ribosomal subunit protein uL2 (RpL8).